The sequence spans 345 residues: uncharacterized protein (345 aa).

3 Solcar repeats span residues 80-153 (MSFF…MKSR), 162-246 (SDPQ…LKLK), and 256-339 (NLAH…ILNF). 6 helical membrane-spanning segments follow: residues 83 to 103 (FEALGAGICAGLAVDLSLFPI), 128 to 148 (GLGSILVGSAPGASLFFTTYE), 220 to 240 (AGYGITIAREIPFTLIQFPIW), 262 to 282 (AISGSIAGGIAAALTTPFDVV), 296 to 316 (VFTIKSIVAHEGFLALYKGIV), and 319 to 339 (VLWLSGGGAIFLGCYDVILNF).

Belongs to the mitochondrial carrier (TC 2.A.29) family.

The protein localises to the mitochondrion inner membrane. This is an uncharacterized protein from Schizosaccharomyces pombe (strain 972 / ATCC 24843) (Fission yeast).